The following is a 363-amino-acid chain: Dihydroorotate dehydrogenase (quinone) (363 aa).

FMN contacts are provided by residues 62–66 (AGYDK) and T86. K66 is a substrate binding site. 111–115 (NRLGF) contributes to the substrate binding site. FMN-binding residues include N140 and N171. N171 contributes to the substrate binding site. Residue S174 is the Nucleophile of the active site. Substrate is bound at residue N176. FMN is bound by residues K216 and S244. 245–246 (NT) contributes to the substrate binding site. FMN contacts are provided by residues G266, G295, and 316–317 (YT).

It belongs to the dihydroorotate dehydrogenase family. Type 2 subfamily. Monomer. It depends on FMN as a cofactor.

It is found in the cell membrane. The catalysed reaction is (S)-dihydroorotate + a quinone = orotate + a quinol. Its pathway is pyrimidine metabolism; UMP biosynthesis via de novo pathway; orotate from (S)-dihydroorotate (quinone route): step 1/1. In terms of biological role, catalyzes the conversion of dihydroorotate to orotate with quinone as electron acceptor. The protein is Dihydroorotate dehydrogenase (quinone) of Chelativorans sp. (strain BNC1).